A 347-amino-acid polypeptide reads, in one-letter code: Homocysteine S-methyltransferase 3 (347 aa).

The Hcy-binding domain occupies 12 to 333 (LMTDFLEKCG…NTIRAIAKVL (322 aa)). Zn(2+)-binding residues include cysteine 251, cysteine 318, and cysteine 319.

In terms of assembly, monomer. Requires Zn(2+) as cofactor. In terms of tissue distribution, expressed predominantly in rosette leaves. Expressed in roots, cauline leaves and developing seeds.

It carries out the reaction S-methyl-L-methionine + L-homocysteine = 2 L-methionine + H(+). Its function is as follows. Catalyzes methyl transfer from S-methylmethionine (SMM) to adenosyl-L-homocysteine (AdoMet). SMM degradation (by HMT-1, HMT-2 and HMT-3) and biosynthesis (by MMT1) constitute the SMM cycle in plants, which is probably required to achieve short term control of AdoMet level. This is Homocysteine S-methyltransferase 3 (HMT3) from Arabidopsis thaliana (Mouse-ear cress).